Consider the following 448-residue polypeptide: Tubulin alpha chain (448 aa).

GTP-binding residues include Gln-12, Glu-73, Ser-142, Gly-146, Thr-147, Thr-181, Asn-208, and Asn-230. Glu-73 is a binding site for Mg(2+). Glu-256 is a catalytic residue.

It belongs to the tubulin family. Dimer of alpha and beta chains. A typical microtubule is a hollow water-filled tube with an outer diameter of 25 nm and an inner diameter of 15 nM. Alpha-beta heterodimers associate head-to-tail to form protofilaments running lengthwise along the microtubule wall with the beta-tubulin subunit facing the microtubule plus end conferring a structural polarity. Microtubules usually have 13 protofilaments but different protofilament numbers can be found in some organisms and specialized cells. Requires Mg(2+) as cofactor.

Its subcellular location is the cytoplasm. The protein localises to the cytoskeleton. The enzyme catalyses GTP + H2O = GDP + phosphate + H(+). Its function is as follows. Tubulin is the major constituent of microtubules, a cylinder consisting of laterally associated linear protofilaments composed of alpha- and beta-tubulin heterodimers. Microtubules grow by the addition of GTP-tubulin dimers to the microtubule end, where a stabilizing cap forms. Below the cap, tubulin dimers are in GDP-bound state, owing to GTPase activity of alpha-tubulin. This chain is Tubulin alpha chain (TUB1), found in Eremothecium gossypii (strain ATCC 10895 / CBS 109.51 / FGSC 9923 / NRRL Y-1056) (Yeast).